We begin with the raw amino-acid sequence, 127 residues long: Oleate-induced peroxisomal protein POX18 (127 aa).

The SCP2 domain maps to 14 to 119 (FKELHEGLAD…KATAIESVFK (106 aa)). A hydrophobic region spans residues 33–41 (AVNAVIVIT). Residues 43 to 52 (KNKEGKEQSW) form a hydrophilic region.

Monomer.

The protein resides in the peroxisome. Its pathway is lipid metabolism; fatty acid metabolism. Is involved in beta-oxidation of long-chain fatty acids. Its exact function is unknown, but possesses a nonspecific lipid-transfer activity, despite the absence of a cysteine residue thought to be essential for the activity of its mammalian counterparts. The protein is Oleate-induced peroxisomal protein POX18 (POX18) of Candida maltosa (Yeast).